The following is a 264-amino-acid chain: MKPTTIASLQKYKQDKKRFATITAYDYSFAKLFADEGLNVMLVGDSLGMTVQGHDSTLPVTVADIAYHTAAVRRGAPNCLLLADLPFMAYATPEQAFENAATVMRAGANMVKIEGGEWLVETVKMLTERAVPVCGHLGLTPQSVNIFGGYKVQGRGNEASDRLLSDALALEAAGAQLLVLECVPVELAKRITEALAIPVIGIGAGNVTDGQILVMHDAFGITGGHIPKFAKNFLAETGDIRAAVRQYMAEVESGVYPGEEHSFH.

Positions 45 and 84 each coordinate Mg(2+). Residues 45–46 (DS), aspartate 84, and lysine 112 contribute to the 3-methyl-2-oxobutanoate site. Residue glutamate 114 coordinates Mg(2+). Glutamate 181 (proton acceptor) is an active-site residue.

Belongs to the PanB family. As to quaternary structure, homodecamer; pentamer of dimers. Mg(2+) serves as cofactor.

It localises to the cytoplasm. It carries out the reaction 3-methyl-2-oxobutanoate + (6R)-5,10-methylene-5,6,7,8-tetrahydrofolate + H2O = 2-dehydropantoate + (6S)-5,6,7,8-tetrahydrofolate. Its pathway is cofactor biosynthesis; (R)-pantothenate biosynthesis; (R)-pantoate from 3-methyl-2-oxobutanoate: step 1/2. Catalyzes the reversible reaction in which hydroxymethyl group from 5,10-methylenetetrahydrofolate is transferred onto alpha-ketoisovalerate to form ketopantoate. This Shigella flexneri serotype 5b (strain 8401) protein is 3-methyl-2-oxobutanoate hydroxymethyltransferase.